The primary structure comprises 463 residues: ATP-dependent protease ATPase subunit HslU (463 aa).

ATP is bound by residues valine 21, 63 to 68 (GVGKTE), aspartate 276, glutamate 341, and arginine 413.

It belongs to the ClpX chaperone family. HslU subfamily. A double ring-shaped homohexamer of HslV is capped on each side by a ring-shaped HslU homohexamer. The assembly of the HslU/HslV complex is dependent on binding of ATP.

It is found in the cytoplasm. Its function is as follows. ATPase subunit of a proteasome-like degradation complex; this subunit has chaperone activity. The binding of ATP and its subsequent hydrolysis by HslU are essential for unfolding of protein substrates subsequently hydrolyzed by HslV. HslU recognizes the N-terminal part of its protein substrates and unfolds these before they are guided to HslV for hydrolysis. This chain is ATP-dependent protease ATPase subunit HslU, found in Thermotoga neapolitana (strain ATCC 49049 / DSM 4359 / NBRC 107923 / NS-E).